The primary structure comprises 289 residues: Right origin-binding protein (289 aa).

One can recognise an HTH araC/xylS-type domain in the interval 8–106 (RDLLIWLEGH…AQTPALYRRS (99 aa)). DNA-binding regions (H-T-H motif) lie at residues 25 to 46 (DNVA…KDVT) and 73 to 96 (ILDI…KKQF).

Transcriptional regulator. Binds to the right arm of the replication origin oriC of the chromosome. Rob binding may influence the formation of the nucleoprotein structure, required for oriC function in the initiation of replication. This chain is Right origin-binding protein (rob), found in Escherichia coli O157:H7.